A 335-amino-acid polypeptide reads, in one-letter code: Holliday junction branch migration complex subunit RuvB (335 aa).

Positions 1-183 (MDERIISSET…FGVIDHLEFY (183 aa)) are large ATPase domain (RuvB-L). ATP-binding positions include L22, R23, G64, K67, T68, T69, 130–132 (EDY), R173, Y183, and R220. T68 lines the Mg(2+) pocket. A small ATPAse domain (RuvB-S) region spans residues 184-254 (TEEQLTEIVL…LAKEALTLLQ (71 aa)). A head domain (RuvB-H) region spans residues 257–335 (PRGLDTIDQK…HLGISYEKEV (79 aa)). Residues R293, R312, and R317 each coordinate DNA.

This sequence belongs to the RuvB family. In terms of assembly, homohexamer. Forms an RuvA(8)-RuvB(12)-Holliday junction (HJ) complex. HJ DNA is sandwiched between 2 RuvA tetramers; dsDNA enters through RuvA and exits via RuvB. An RuvB hexamer assembles on each DNA strand where it exits the tetramer. Each RuvB hexamer is contacted by two RuvA subunits (via domain III) on 2 adjacent RuvB subunits; this complex drives branch migration. In the full resolvosome a probable DNA-RuvA(4)-RuvB(12)-RuvC(2) complex forms which resolves the HJ.

The protein resides in the cytoplasm. It catalyses the reaction ATP + H2O = ADP + phosphate + H(+). Its function is as follows. The RuvA-RuvB-RuvC complex processes Holliday junction (HJ) DNA during genetic recombination and DNA repair, while the RuvA-RuvB complex plays an important role in the rescue of blocked DNA replication forks via replication fork reversal (RFR). RuvA specifically binds to HJ cruciform DNA, conferring on it an open structure. The RuvB hexamer acts as an ATP-dependent pump, pulling dsDNA into and through the RuvAB complex. RuvB forms 2 homohexamers on either side of HJ DNA bound by 1 or 2 RuvA tetramers; 4 subunits per hexamer contact DNA at a time. Coordinated motions by a converter formed by DNA-disengaged RuvB subunits stimulates ATP hydrolysis and nucleotide exchange. Immobilization of the converter enables RuvB to convert the ATP-contained energy into a lever motion, pulling 2 nucleotides of DNA out of the RuvA tetramer per ATP hydrolyzed, thus driving DNA branch migration. The RuvB motors rotate together with the DNA substrate, which together with the progressing nucleotide cycle form the mechanistic basis for DNA recombination by continuous HJ branch migration. Branch migration allows RuvC to scan DNA until it finds its consensus sequence, where it cleaves and resolves cruciform DNA. This is Holliday junction branch migration complex subunit RuvB from Listeria monocytogenes serovar 1/2a (strain ATCC BAA-679 / EGD-e).